The primary structure comprises 414 residues: Serine hydroxymethyltransferase (414 aa).

Residues Leu-118 and 122–124 (GHL) contribute to the (6S)-5,6,7,8-tetrahydrofolate site. Lys-227 carries the N6-(pyridoxal phosphate)lysine modification. Residues Glu-240 and 350–352 (SPF) contribute to the (6S)-5,6,7,8-tetrahydrofolate site.

It belongs to the SHMT family. Homodimer. The cofactor is pyridoxal 5'-phosphate.

It is found in the cytoplasm. It carries out the reaction (6R)-5,10-methylene-5,6,7,8-tetrahydrofolate + glycine + H2O = (6S)-5,6,7,8-tetrahydrofolate + L-serine. The protein operates within one-carbon metabolism; tetrahydrofolate interconversion. It functions in the pathway amino-acid biosynthesis; glycine biosynthesis; glycine from L-serine: step 1/1. Its function is as follows. Catalyzes the reversible interconversion of serine and glycine with tetrahydrofolate (THF) serving as the one-carbon carrier. This reaction serves as the major source of one-carbon groups required for the biosynthesis of purines, thymidylate, methionine, and other important biomolecules. Also exhibits THF-independent aldolase activity toward beta-hydroxyamino acids, producing glycine and aldehydes, via a retro-aldol mechanism. The polypeptide is Serine hydroxymethyltransferase (Bacillus cereus (strain ZK / E33L)).